A 165-amino-acid chain; its full sequence is UPF0262 protein blr1257 (165 aa).

Belongs to the UPF0262 family.

The chain is UPF0262 protein blr1257 from Bradyrhizobium diazoefficiens (strain JCM 10833 / BCRC 13528 / IAM 13628 / NBRC 14792 / USDA 110).